Consider the following 440-residue polypeptide: tRNA-2-methylthio-N(6)-dimethylallyladenosine synthase (440 aa).

One can recognise an MTTase N-terminal domain in the interval 5–121 (KLLYLETFGC…LPELVRAAEK (117 aa)). [4Fe-4S] cluster-binding residues include Cys-14, Cys-50, Cys-84, Cys-159, Cys-163, and Cys-166. In terms of domain architecture, Radical SAM core spans 145–375 (RTDGVSRFVT…LDLQRRITLE (231 aa)). The 63-residue stretch at 378-440 (KSFVGTVQQV…QNSLQGELCR (63 aa)) folds into the TRAM domain.

It belongs to the methylthiotransferase family. MiaB subfamily. In terms of assembly, monomer. [4Fe-4S] cluster serves as cofactor.

The protein resides in the cytoplasm. The catalysed reaction is N(6)-dimethylallyladenosine(37) in tRNA + (sulfur carrier)-SH + AH2 + 2 S-adenosyl-L-methionine = 2-methylsulfanyl-N(6)-dimethylallyladenosine(37) in tRNA + (sulfur carrier)-H + 5'-deoxyadenosine + L-methionine + A + S-adenosyl-L-homocysteine + 2 H(+). Catalyzes the methylthiolation of N6-(dimethylallyl)adenosine (i(6)A), leading to the formation of 2-methylthio-N6-(dimethylallyl)adenosine (ms(2)i(6)A) at position 37 in tRNAs that read codons beginning with uridine. The protein is tRNA-2-methylthio-N(6)-dimethylallyladenosine synthase of Geotalea uraniireducens (strain Rf4) (Geobacter uraniireducens).